Reading from the N-terminus, the 636-residue chain is LEAF RUST 10 DISEASE-RESISTANCE LOCUS RECEPTOR-LIKE PROTEIN KINASE-like 1.5 (636 aa).

Positions 1–26 (MSQPPWRCFSLLIFVLTIFSTKPSSA) are cleaved as a signal peptide. The Extracellular portion of the chain corresponds to 27–257 (STSCSSSFHC…NNKRVNHIAV (231 aa)). 4 N-linked (GlcNAc...) asparagine glycosylation sites follow: N73, N102, N146, and N224. Residues 258-278 (LSLIFALTCLLLVFSVAVAIF) traverse the membrane as a helical segment. At 279-636 (RSRRASFLSS…RVADDDVAKN (358 aa)) the chain is on the cytoplasmic side. Residues 324-628 (FDPKRKIGDG…LRRIRSHTRV (305 aa)) form the Protein kinase domain. ATP is bound by residues 330–338 (IGDGGFGSV) and K352. The active-site Proton acceptor is D458.

The protein belongs to the protein kinase superfamily. Ser/Thr protein kinase family.

The protein resides in the cell membrane. The enzyme catalyses L-seryl-[protein] + ATP = O-phospho-L-seryl-[protein] + ADP + H(+). It carries out the reaction L-threonyl-[protein] + ATP = O-phospho-L-threonyl-[protein] + ADP + H(+). This Arabidopsis thaliana (Mouse-ear cress) protein is LEAF RUST 10 DISEASE-RESISTANCE LOCUS RECEPTOR-LIKE PROTEIN KINASE-like 1.5.